The primary structure comprises 2293 residues: MGARAVVISSLAWGLLSCCFLCSGALGSQRPLRSLPPLPSQAKPRSEPMWMPPKGAEAALAFLYSGDVQRLSGANCSEKYEVRGAEGKAGVPPVLQRAAGTLAQAANFLNMLLQANDIRESSVEEDVEWYQALVRSVAEGDPKAYRALLTFNPAPGASHLQLALQATRMGDETVLQDLSGNKVQEETPGEDLDRPVLQKRVLTNDLRSLDSPKWPRGDGYVGDIQQVKLSPPFLECHEGQLRPGWLVTVSATFYGLKPDLTPEVRGQVQMDIDLQSVDINQCASGPGWYSNTHLCDLNSTQCVPLESQGFVLGRYLCRCRPGFYGASGSGGLEESATQAAGQFGSPQDSLGKLLRCQPCPEGCTSCLDATPCLVEEALALRTAVLACQACCMLAVFLSMLVAYRCRGSKRIRASGIVLLETILFGSLLLYFPVFILYFKPSVFRCVALRWVRLLGFAVVYGTIILKLYRVLQLFLSRTAQRVPHPSSGQLLRRLGQLLLLVLGFLVVWTAGALEPGTQHTALVTRGHTPTGRHFYLCHHDHWDYIMVVAEMLLLCWGSFLCYATRAVPSAFHEPRYMSIALHNELLLSTAFHTARFVLVPSLHPDWTLLLFFLHTHSTVTATLALIFIPKFWKPGAPPREEILDEVYEDELDLQRSGSYLNSSIASAWSERSLEPGDIRDELKKLYAQLEIRKTKEMAANNPHLPKKRGSSHQGLGRSFMRYLAEFPEALARQHSRDSGSLGLGSLPGSSRRRLLSSSLQETEKPPALRKTRSTYDHHREHNTLPFDSTLRRTLSKKASPTDGRESLADGPPALGFRSASAHNLTVGERLPRARPISLQKSLSVAAGSREKALLVASQAYLEETYRQAKEREERKKAEAAMVSPVRRPSTRRLEWPLRAPLSAPPSPGKSSSMDSSQTTARPHEEAGRRLPHPPIRHQVSTPVLALSGICLGEPRMLSPTPASTLAPILLPAPAPAPAPVLAPVSKPPQSPTLLTFICPWENAELPGKKENVVQEDPAGPERSGHSPASARTKIWRALSVAVEKRGTGESEALTEGGHVQGEADDTDEEKPKVFSKSHSLKTPLQQGSVRSLGLAIKALTRSRSTYKEKDGGEGTPETEKGKPTEVSTGAPLRSPRLGRPKAVSKQVALAPCEDEESLQNQQNAHTSRMLHVCQKEGSREQEDRNKRVAPGPGERKVERTGKITMTTLRQVFGEKNAEQAKESPAGYQEVPNPALQSLGSADHRVAEVCPWEVTEPESGMDPPESVNKAKVYSWERTEGGSLEKKPSRQVLSRSWEEREKVLAESETEGVGAIPRKKPERLVRSQEAVCPWESPDSGGLSPQLVHQESDRTGGRFVVVSKGDAHPEALPSHAAKAELCLWEMSDVGEGTSTQRVQELPEERQKSPKKATFWGERNLGGDLVSLCPWESTDFRGPSAVSLQAPGSSGSLGSGIAEVCPWEAENIANDKKAEVCPWELGEELAGSDGLNPGADGKSLPGKETPSRKGCLAESGEQTVRAKPTVPQGQESVCPWEDEAPERSSPQPDKASSKAGEKLLSHGGSQVLQVCPWEAVKPEEKQATLSTAEICPWEVDGQPETRTSEHPSKGEVHKDEEKMPGRARIKAQEEAEGRIQKQEAICPWESMAPGSTPQRDTEKAQASLQRQGSVAGRAAEICPWEVGTEVGEERTIGAEASEARPNDAGHASTDSGSRQVAASAPKKSERLGSEKEVVCPWDSLSPGDSSQQPDTPNTEKLKDELQEHGSSRPIEVCPWEAEEVPTGEKAKICPWELNEGTVGKGLEREPGCEPERQRRQNLEEAGLPFQEEGTSKGDTKLCREQEGEAICPWKPPAQVPKVSDLPLSTVGQGVEGQSLEASDRASEKGELRQDLKMGSLPEYITQVVPVDGGGASSELQPISLQEGMVLAGSSSHPHIQCPDQPRVSSQPLVSTGDGTAEVCPWDAPDSDSDTKVEPCAQKVTGRVTETEMSRQDEKEKSQEEKERAPETRDHEGVAVQKMPQTSNFGKQEAVCPRESQDFGVQAATDASDGSKGGSEKVCPWEVEEVPSIKEAEICPWEASPGAVGEGALDLGQDGESQGEGRAERHLLKAAETVCPLEGTMSSGLFTQEDVVDTDLPKVGLHGASSPGKGLAELCVWEVTDPEGNKIKGTMADICPWEETRAQSDESGPLALPVTQAGVPAAPEKSVCLSVHGPLESFLPESKSVRPDISKPPGSSRPEGVREQEPLELETGAKSVPKPSPTETEAPESFTLTDDQGLMASEGEAGELSPPPDYPWDCE.

A signal peptide spans 1-27; sequence MGARAVVISSLAWGLLSCCFLCSGALG. Positions 62-245 are cache-like region; it reads FLYSGDVQRL…CHEGQLRPGW (184 aa). Asn75 carries an N-linked (GlcNAc...) asparagine glycan. A disulfide bond links Cys76 and Cys236. Residue Asn298 is glycosylated (N-linked (GlcNAc...) asparagine). The next 7 helical transmembrane spans lie at 383–403, 416–436, 445–465, 494–514, 544–564, 585–602, and 608–628; these read AVLA…LVAY, IVLL…VFIL, CVAL…TIIL, LGQL…GALE, YIMV…CYAT, LLLS…VPSL, and LLLF…LIFI. Cys445 and Cys537 are joined by a disulfide. A glycan (N-linked (GlcNAc...) asparagine) is linked at Asn661. Positions 733 to 812 are disordered; sequence QHSRDSGSLG…GRESLADGPP (80 aa). Residues 738 to 759 are compositionally biased toward low complexity; that stretch reads SGSLGLGSLPGSSRRRLLSSSL. Over residues 773-782 the composition is skewed to basic and acidic residues; it reads STYDHHREHN. N-linked (GlcNAc...) asparagine glycosylation is present at Asn823. Disordered stretches follow at residues 872-935, 1046-1235, 1275-1294, 1326-1345, 1388-1411, 1479-1560, 1578-1770, 1792-1828, 1844-1882, 1924-2051, and 2212-2293; these read EERK…HPPI, GTGE…NPAL, ERTE…LSRS, EAVC…QLVH, GTST…ATFW, ELAG…HGGS, ATLS…VCPW, TVGK…TSKG, WKPP…KGEL, SSSH…GSEK, and FLPE…WDCE. Polar residues predominate over residues 1080-1089; it reads LKTPLQQGSV. 3 stretches are compositionally biased toward basic and acidic residues: residues 1105–1123, 1173–1186, and 1275–1286; these read TYKE…KGKP, CQKE…DRNK, and ERTEGGSLEKKP. 2 stretches are compositionally biased toward basic and acidic residues: residues 1546-1555 and 1597-1632; these read ASSKAGEKLL and RTSE…RIQK. Positions 1644–1663 are enriched in polar residues; it reads PGSTPQRDTEKAQASLQRQG. Basic and acidic residues-rich tracts occupy residues 1682–1698 and 1717–1728; these read GEER…RPND and KKSERLGSEKEV. Polar residues predominate over residues 1737–1747; the sequence is PGDSSQQPDTP. 3 stretches are compositionally biased toward basic and acidic residues: residues 1748–1761, 1796–1813, and 1872–1882; these read NTEK…EHGS, GLER…RQNL, and ASDRASEKGEL. Residues 1937-1948 are compositionally biased toward polar residues; that stretch reads RVSSQPLVSTGD. Basic and acidic residues predominate over residues 1979-2007; that stretch reads TETEMSRQDEKEKSQEEKERAPETRDHEG. The span at 2283–2293 shows a compositional bias: pro residues; the sequence is SPPPDYPWDCE.

It belongs to the G-protein coupled receptor 3 family. Homodimer. Associates with the R7 group RGS-GNB5 complexes, composed of an R7 group RGS subunit (RGS6, RGS7, RGS9 or RGS11) and GNB5, promoting their localization to the cell membrane and regulating the GTPase activator activity of R7 RGS proteins. Interacts with TRPM1. Interacts with GRM6. Interacts with EGFLAM; transsynaptic interaction is required for synaptic organization of photoreceptor cells.

It localises to the cell membrane. The protein resides in the postsynaptic cell membrane. It is found in the cell projection. Its subcellular location is the dendrite. Orphan receptor involved in vision. Required for signal transduction through retinal depolarizing bipolar cells. Acts as an atypical G-protein coupled receptor that recruits and regulates the R7 group RGS-GNB5 complexes instead of activating G proteins: promotes the GTPase activator activity of R7 RGS proteins, increasing the GTPase activity of G protein alpha subunits, thereby driving them into their inactive GDP-bound form. Associates with components of metabotropic signaling cascade in retina ON-bipolar neurons, such as TRPM1 and GRM6: may control the ability of the GRM6 cascade to gate TRPM1. In Mus musculus (Mouse), this protein is G-protein coupled receptor 179.